We begin with the raw amino-acid sequence, 252 residues long: Large ribosomal subunit protein uL4 (252 aa).

Belongs to the universal ribosomal protein uL4 family. As to quaternary structure, part of the 50S ribosomal subunit.

Its function is as follows. One of the primary rRNA binding proteins, this protein initially binds near the 5'-end of the 23S rRNA. It is important during the early stages of 50S assembly. It makes multiple contacts with different domains of the 23S rRNA in the assembled 50S subunit and ribosome. In terms of biological role, forms part of the polypeptide exit tunnel. The protein is Large ribosomal subunit protein uL4 of Methanococcus aeolicus (strain ATCC BAA-1280 / DSM 17508 / OCM 812 / Nankai-3).